We begin with the raw amino-acid sequence, 396 residues long: Subtilisin-like protease 5 (396 aa).

The first 20 residues, 1 to 20 (MTGFFTFLSFSLAALSVTNA), serve as a signal peptide directing secretion. Residues 21 to 116 (AHILSVPKGA…VEPDAIISQH (96 aa)) constitute a propeptide that is removed on maturation. Residues 37 to 113 (YIVVMKDDTS…VAFVEPDAII (77 aa)) enclose the Inhibitor I9 domain. N63 carries N-linked (GlcNAc...) asparagine glycosylation. In terms of domain architecture, Peptidase S8 spans 125 to 396 (PWGLSRLSNR…SRLLYNGSGR (272 aa)). Residues D156 and H187 each act as charge relay system in the active site. N230 and N248 each carry an N-linked (GlcNAc...) asparagine glycan. S342 (charge relay system) is an active-site residue. A compositionally biased stretch (polar residues) spans 376–389 (PTIRNPGPDTTSRL). A disordered region spans residues 376-396 (PTIRNPGPDTTSRLLYNGSGR). The N-linked (GlcNAc...) asparagine glycan is linked to N392.

It belongs to the peptidase S8 family.

It localises to the secreted. In terms of biological role, secreted subtilisin-like serine protease with keratinolytic activity that contributes to pathogenicity. The chain is Subtilisin-like protease 5 (SUB5) from Trichophyton tonsurans (Scalp ringworm fungus).